The sequence spans 96 residues: Putative pterin-4-alpha-carbinolamine dehydratase (96 aa).

This sequence belongs to the pterin-4-alpha-carbinolamine dehydratase family.

It catalyses the reaction (4aS,6R)-4a-hydroxy-L-erythro-5,6,7,8-tetrahydrobiopterin = (6R)-L-erythro-6,7-dihydrobiopterin + H2O. This chain is Putative pterin-4-alpha-carbinolamine dehydratase, found in Prochlorococcus marinus (strain MIT 9301).